A 252-amino-acid chain; its full sequence is tRNA pseudouridine synthase A (252 aa).

Aspartate 52 acts as the Nucleophile in catalysis. Substrate is bound at residue tyrosine 110.

It belongs to the tRNA pseudouridine synthase TruA family. In terms of assembly, homodimer.

It catalyses the reaction uridine(38/39/40) in tRNA = pseudouridine(38/39/40) in tRNA. Formation of pseudouridine at positions 38, 39 and 40 in the anticodon stem and loop of transfer RNAs. This is tRNA pseudouridine synthase A from Blochmanniella floridana.